The sequence spans 236 residues: 2,3,4,5-tetrahydropyridine-2,6-dicarboxylate N-acetyltransferase (236 aa).

Belongs to the transferase hexapeptide repeat family. DapH subfamily.

It catalyses the reaction (S)-2,3,4,5-tetrahydrodipicolinate + acetyl-CoA + H2O = L-2-acetamido-6-oxoheptanedioate + CoA. It participates in amino-acid biosynthesis; L-lysine biosynthesis via DAP pathway; LL-2,6-diaminopimelate from (S)-tetrahydrodipicolinate (acetylase route): step 1/3. In terms of biological role, catalyzes the transfer of an acetyl group from acetyl-CoA to tetrahydrodipicolinate. The protein is 2,3,4,5-tetrahydropyridine-2,6-dicarboxylate N-acetyltransferase of Geobacillus sp. (strain WCH70).